Here is a 160-residue protein sequence, read N- to C-terminus: Protein-export protein SecB (160 aa).

This sequence belongs to the SecB family. Homotetramer, a dimer of dimers. One homotetramer interacts with 1 SecA dimer.

The protein resides in the cytoplasm. One of the proteins required for the normal export of preproteins out of the cell cytoplasm. It is a molecular chaperone that binds to a subset of precursor proteins, maintaining them in a translocation-competent state. It also specifically binds to its receptor SecA. In Burkholderia lata (strain ATCC 17760 / DSM 23089 / LMG 22485 / NCIMB 9086 / R18194 / 383), this protein is Protein-export protein SecB.